The sequence spans 532 residues: Zinc metalloproteinase nas-29 (532 aa).

Residues 1 to 22 (MISKNTSFCGFLILVLATCMSA) form the signal peptide. N-linked (GlcNAc...) asparagine glycans are attached at residues Asn5, Asn27, Asn70, and Asn106. Residues 23 to 134 (QFVSNESIKL…NGESTDRTKR (112 aa)) constitute a propeptide that is removed on maturation. Residues 135 to 335 (QAYLDNNYPA…HIMNQHYQCQ (201 aa)) form the Peptidase M12A domain. 6 disulfides stabilise this stretch: Cys179–Cys334, Cys201–Cys222, Cys338–Cys358, Cys360–Cys369, Cys380–Cys408, and Cys435–Cys456. Zn(2+) is bound at residue His230. Residue Glu231 is part of the active site. 2 residues coordinate Zn(2+): His234 and His240. Residues 330–370 (QHYQCQEKCPTQAPCQNGGFTNSRNCKVCKCPTGFGGAYCQ) enclose the EGF-like domain. The CUB domain maps to 380–494 (CGGYLNAEET…VSFEYSFVST (115 aa)). The N-linked (GlcNAc...) asparagine glycan is linked to Asn503.

Zn(2+) is required as a cofactor.

The protein localises to the secreted. Functionally, metalloprotease. This is Zinc metalloproteinase nas-29 (nas-29) from Caenorhabditis elegans.